The following is a 310-amino-acid chain: HPr kinase/phosphorylase (310 aa).

Residues His138 and Lys159 contribute to the active site. An ATP-binding site is contributed by 153-160; that stretch reads GDSGIGKS. Position 160 (Ser160) interacts with Mg(2+). The active-site Proton acceptor; for phosphorylation activity. Proton donor; for dephosphorylation activity is Asp177. Residues 201–210 are important for the catalytic mechanism of both phosphorylation and dephosphorylation; sequence LEIRGVGIID. Glu202 serves as a coordination point for Mg(2+). The active site involves Arg243. An important for the catalytic mechanism of dephosphorylation region spans residues 264–269; sequence PVKTGR.

Belongs to the HPrK/P family. Homohexamer. It depends on Mg(2+) as a cofactor.

It catalyses the reaction [HPr protein]-L-serine + ATP = [HPr protein]-O-phospho-L-serine + ADP + H(+). It carries out the reaction [HPr protein]-O-phospho-L-serine + phosphate + H(+) = [HPr protein]-L-serine + diphosphate. Functionally, catalyzes the ATP- as well as the pyrophosphate-dependent phosphorylation of a specific serine residue in HPr, a phosphocarrier protein of the phosphoenolpyruvate-dependent sugar phosphotransferase system (PTS). HprK/P also catalyzes the pyrophosphate-producing, inorganic phosphate-dependent dephosphorylation (phosphorolysis) of seryl-phosphorylated HPr (P-Ser-HPr). The two antagonistic activities of HprK/P are regulated by several intracellular metabolites, which change their concentration in response to the absence or presence of rapidly metabolisable carbon sources (glucose, fructose, etc.) in the growth medium. Therefore, by controlling the phosphorylation state of HPr, HPrK/P is a sensor enzyme that plays a major role in the regulation of carbon metabolism and sugar transport: it mediates carbon catabolite repression (CCR), and regulates PTS-catalyzed carbohydrate uptake and inducer exclusion. This chain is HPr kinase/phosphorylase, found in Streptococcus uberis (strain ATCC BAA-854 / 0140J).